A 280-amino-acid chain; its full sequence is Acyl-[acyl-carrier-protein]--UDP-N-acetylglucosamine O-acyltransferase (280 aa).

This sequence belongs to the transferase hexapeptide repeat family. LpxA subfamily. Homotrimer.

The protein localises to the cytoplasm. It catalyses the reaction a (3R)-hydroxyacyl-[ACP] + UDP-N-acetyl-alpha-D-glucosamine = a UDP-3-O-[(3R)-3-hydroxyacyl]-N-acetyl-alpha-D-glucosamine + holo-[ACP]. It participates in glycolipid biosynthesis; lipid IV(A) biosynthesis; lipid IV(A) from (3R)-3-hydroxytetradecanoyl-[acyl-carrier-protein] and UDP-N-acetyl-alpha-D-glucosamine: step 1/6. Its function is as follows. Involved in the biosynthesis of lipid A, a phosphorylated glycolipid that anchors the lipopolysaccharide to the outer membrane of the cell. This Chlamydia muridarum (strain MoPn / Nigg) protein is Acyl-[acyl-carrier-protein]--UDP-N-acetylglucosamine O-acyltransferase.